Here is a 359-residue protein sequence, read N- to C-terminus: DNA-directed RNA polymerase RPB3-11 homolog (359 aa).

The protein in the N-terminal section; belongs to the archaeal RpoD/eukaryotic RPB3 RNA polymerase subunit family. This sequence in the C-terminal section; belongs to the archaeal RpoL/eukaryotic RPB11/RPC19 RNA polymerase subunit family. In terms of assembly, part of the viral DNA-directed RNA polymerase that consists of 8 polII-like subunits (RPB1, RPB2, RPB3, RPB5, RPB6, RPB7, RPB9, RPB10), a capping enzyme and a termination factor.

It is found in the host cytoplasm. It localises to the virion. In terms of biological role, component of the DNA-directed RNA polymerase (RNAP) that catalyzes the transcription in the cytoplasm of viral DNA into RNA using the four ribonucleoside triphosphates as substrates. The polypeptide is DNA-directed RNA polymerase RPB3-11 homolog (Ornithodoros (relapsing fever ticks)).